We begin with the raw amino-acid sequence, 702 residues long: Elongation factor G (702 aa).

Positions 8–290 constitute a tr-type G domain; that stretch reads ERYRNIGISA…GVVEYLPSPV (283 aa). GTP-binding positions include 17 to 24, 88 to 92, and 142 to 145; these read AHIDAGKT, DTPGH, and NKMD.

This sequence belongs to the TRAFAC class translation factor GTPase superfamily. Classic translation factor GTPase family. EF-G/EF-2 subfamily.

The protein localises to the cytoplasm. Its function is as follows. Catalyzes the GTP-dependent ribosomal translocation step during translation elongation. During this step, the ribosome changes from the pre-translocational (PRE) to the post-translocational (POST) state as the newly formed A-site-bound peptidyl-tRNA and P-site-bound deacylated tRNA move to the P and E sites, respectively. Catalyzes the coordinated movement of the two tRNA molecules, the mRNA and conformational changes in the ribosome. The sequence is that of Elongation factor G from Janthinobacterium sp. (strain Marseille) (Minibacterium massiliensis).